Here is a 103-residue protein sequence, read N- to C-terminus: Small ribosomal subunit protein uS10 (103 aa).

Belongs to the universal ribosomal protein uS10 family. Part of the 30S ribosomal subunit.

Its function is as follows. Involved in the binding of tRNA to the ribosomes. The polypeptide is Small ribosomal subunit protein uS10 (Shewanella amazonensis (strain ATCC BAA-1098 / SB2B)).